The following is a 106-amino-acid chain: Malonate decarboxylase acyl carrier protein (106 aa).

S28 bears the O-(phosphoribosyl dephospho-coenzyme A)serine mark.

Belongs to the MdcC family. In terms of processing, covalently binds the prosthetic group of malonate decarboxylase.

Its subcellular location is the cytoplasm. Its function is as follows. Subunit of malonate decarboxylase, it is an acyl carrier protein to which acetyl and malonyl thioester residues are bound via a 2'-(5''-phosphoribosyl)-3'-dephospho-CoA prosthetic group and turn over during the catalytic mechanism. In Stenotrophomonas maltophilia (strain R551-3), this protein is Malonate decarboxylase acyl carrier protein.